The chain runs to 449 residues: Probable rhamnogalacturonase E (449 aa).

The signal sequence occupies residues 1 to 21 (MRSKTFSVLSSCLLLIATVQG). Cysteine 42 and cysteine 68 are joined by a disulfide. N-linked (GlcNAc...) asparagine glycans are attached at residues asparagine 53, asparagine 91, and asparagine 106. The active-site Proton donor is aspartate 221. A disulfide bridge connects residues cysteine 223 and cysteine 240. N-linked (GlcNAc...) asparagine glycans are attached at residues asparagine 241 and asparagine 256. Residue histidine 296 is part of the active site. An N-linked (GlcNAc...) asparagine glycan is attached at asparagine 323. 2 disulfide bridges follow: cysteine 346-cysteine 352 and cysteine 374-cysteine 383.

This sequence belongs to the glycosyl hydrolase 28 family.

The protein localises to the secreted. It catalyses the reaction Endohydrolysis of alpha-D-GalA-(1-&gt;2)-alpha-L-Rha glycosidic bond in the rhamnogalacturonan I backbone with initial inversion of anomeric configuration releasing oligosaccharides with beta-D-GalA at the reducing end.. Functionally, pectinolytic enzymes consist of four classes of enzymes: pectine lyase, polygalacturonase, pectin methylesterase and rhamnogalacturonase. Hydrolyzes alpha-D-galacturonopyranosyl-(1,2)-alpha-L-rhamnopyranosyl linkages in the backbone of the hairy regions of pectins. This chain is Probable rhamnogalacturonase E (rhgE), found in Aspergillus flavus (strain ATCC 200026 / FGSC A1120 / IAM 13836 / NRRL 3357 / JCM 12722 / SRRC 167).